Here is a 107-residue protein sequence, read N- to C-terminus: Theromyzin (107 aa).

A signal peptide spans 1–21 (MHAKIILALFLGMTAFLAVQA).

As to expression, coelomic liquid (at protein level). Expressed in large fat cells in contact with coelomic cavities, in intestinal epithelia and at the epidermis level.

The protein resides in the secreted. In terms of biological role, has bacteriostatic activity against M.luteus. No activity toward E.coli and F.oxysporum. This is Theromyzin from Theromyzon tessulatum (Duck leech).